The following is a 357-amino-acid chain: Phosphoserine aminotransferase (357 aa).

Arg-41 serves as a coordination point for L-glutamate. Pyridoxal 5'-phosphate contacts are provided by residues 75 to 76 (GT), Trp-100, Thr-150, Asp-170, and Gln-193. Position 194 is an N6-(pyridoxal phosphate)lysine (Lys-194). 234-235 (NT) lines the pyridoxal 5'-phosphate pocket.

The protein belongs to the class-V pyridoxal-phosphate-dependent aminotransferase family. SerC subfamily. In terms of assembly, homodimer. It depends on pyridoxal 5'-phosphate as a cofactor.

The protein localises to the cytoplasm. The enzyme catalyses O-phospho-L-serine + 2-oxoglutarate = 3-phosphooxypyruvate + L-glutamate. The catalysed reaction is 4-(phosphooxy)-L-threonine + 2-oxoglutarate = (R)-3-hydroxy-2-oxo-4-phosphooxybutanoate + L-glutamate. It participates in amino-acid biosynthesis; L-serine biosynthesis; L-serine from 3-phospho-D-glycerate: step 2/3. Functionally, catalyzes the reversible conversion of 3-phosphohydroxypyruvate to phosphoserine and of 3-hydroxy-2-oxo-4-phosphonooxybutanoate to phosphohydroxythreonine. In Lactiplantibacillus plantarum (strain ATCC BAA-793 / NCIMB 8826 / WCFS1) (Lactobacillus plantarum), this protein is Phosphoserine aminotransferase.